The primary structure comprises 33 residues: uncharacterized protein (33 aa).

It is found in the cytoplasm. The protein localises to the nucleus. This is an uncharacterized protein from Schizosaccharomyces pombe (strain 972 / ATCC 24843) (Fission yeast).